The following is a 100-amino-acid chain: U-myrmeciitoxin(01)-Mg7b (100 aa).

The N-terminal stretch at 1 to 17 is a signal peptide; sequence MKLSCLSLALAIILVLA. Residues 18 to 50 constitute a propeptide that is removed on maturation; it reads IVYSPHMEVKALADAEPDAIGFADAFGEADAEP. The O-linked (GalNAc...) serine glycan is linked to Ser-85. Residues Thr-94 and Thr-95 are each glycosylated (O-linked (GalNAc...) threonine).

The protein belongs to the formicidae venom precursor-01 superfamily. Post-translationally, glycosylation is critical to maintaining the aqueous solubility of this protein, but does not directly contribute to its activity. Expressed by the venom gland.

It is found in the secreted. The protein localises to the target cell membrane. Its function is as follows. Neurotoxin that triggers pain behavior and inflammation in mammals, and is paralytic and lethal to insects. Causes a time-dependent increase in cell leak current. May act by targeting membranes. The chain is U-myrmeciitoxin(01)-Mg7b from Myrmecia gulosa (Red bulldog ant).